Reading from the N-terminus, the 413-residue chain is MYSPGYVATSSRQSDAGNRLFVYEVIGLSQSTMTDGLDYPIRRSGSTFITVPLKRMNQEMRRITRMGGKIVSIKPLEGDSPLPHTEGIAKPSQSEGSGSEAVANPAPESNKTMTTTPKEKKADDIPVNIYRPKTPYIGKVLENYPLVREGAIGTVQHLTFDLSAGDLRYLEGQSIGIIPPGEDDKGKPHKLRLYSIASTRHGDFGDDKTVSLCVRQLEYQNEAGETVQGVCSTYLCNIKEGDDIAITGPVGKEMLLPPDEDANIVMLATGTGIAPFRAFLWRMFKEQHEDYKFKGLAWLIFGIPKSENILYKDDLEKMAAEFPDNFRLTYAISREQQNAEGGRMYIQHRVAENAEELWNLMQNPKTHTYMCGLKGMEPGIDEAFTALAEQNGKEWTTFQREMKKEHRWHVETY.

An N-acetylmethionine modification is found at M1. The CpcD-like domain maps to 18–76 (NRLFVYEVIGLSQSTMTDGLDYPIRRSGSTFITVPLKRMNQEMRRITRMGGKIVSIKPL). A disordered region spans residues 74–120 (KPLEGDSPLPHTEGIAKPSQSEGSGSEAVANPAPESNKTMTTTPKEK). Residues 107–116 (PESNKTMTTT) are compositionally biased toward polar residues. An FAD-binding FR-type domain is found at 133–256 (KTPYIGKVLE…TGPVGKEMLL (124 aa)). FAD contacts are provided by residues 192–195 (RLYS), 213–215 (CVR), Y219, 230–232 (VCS), and T271. 2 residues coordinate NADP(+): S195 and R215. Residues T271, 303–304 (IP), 333–334 (SR), 343–347 (RMYIQ), 372–373 (GL), and E411 contribute to the NADP(+) site.

This sequence belongs to the ferredoxin--NADP reductase type 1 family. As to quaternary structure, purifies with both the classic phycobilisome (PBS) supercomplex (CpcG-PBS) and a photosystem I-associated PBS called CpcL-PBS; it accumulates to a higher level in CpcL-PBS. In both PBS it can be cross-linked to both phycocyanin subunits. Requires FAD as cofactor. Acetylated at the N-terminus; 6% of protein in CpcG-PBS and 12% of protein in CpcL-PBS is acetylated.

It is found in the cellular thylakoid membrane. The enzyme catalyses 2 reduced [2Fe-2S]-[ferredoxin] + NADP(+) + H(+) = 2 oxidized [2Fe-2S]-[ferredoxin] + NADPH. This Synechocystis sp. (strain ATCC 27184 / PCC 6803 / Kazusa) protein is Ferredoxin--NADP reductase.